The primary structure comprises 505 residues: MITLTGHTLTVEEMKRLLLEGEGVTACPNSMQKVAECREVVEKIVEDGKVVYGITTGFGKFSDVLIQKEDVKALQHNLIQSHACGIGDPFPEEVSRGMLILRANTMLKGVSGVRPLVVNMLLEFVNRKIHPVVPQQGSLGASGDLAPLSHLALVLLGEGEVFYKGKRAHAMVALTEEGLEPIELEAKEGLALINGTQAMTAQGVLSYIEAEATAYQAELIASMTIEGLQGIIDAFDENVHKARGYKEQVEVASRIRDILHDSKLTTKQGELRVQDAYSLRCIPQVHGASWQVLNYVKEKLEIEMNAATDNPLIFDGGEKVISGGNFHGQPIAFAMDFLKVGMAELANISERRIERLVNPQLNDLPPFLSPEPGLQSGAMIMQYAAASLVSENKTLAHPASVDSIPSSANQEDHVSMGTIASRHAHQIIQNVRRVLSIEMICAMQAAEYRGIENMSTVTKSFYHQGRQQVPSITNDRIFSTDIENITHWLKTNYSIKERLDVNAAL.

The 5-imidazolinone (Ala-Gly) cross-link spans 141–143; sequence ASG. A 2,3-didehydroalanine (Ser) modification is found at Ser142.

It belongs to the PAL/histidase family. In terms of processing, contains an active site 4-methylidene-imidazol-5-one (MIO), which is formed autocatalytically by cyclization and dehydration of residues Ala-Ser-Gly.

Its subcellular location is the cytoplasm. It catalyses the reaction L-histidine = trans-urocanate + NH4(+). It functions in the pathway amino-acid degradation; L-histidine degradation into L-glutamate; N-formimidoyl-L-glutamate from L-histidine: step 1/3. The chain is Histidine ammonia-lyase from Bacillus cereus (strain ZK / E33L).